The primary structure comprises 428 residues: 3-deoxy-D-manno-octulosonic acid transferase (428 aa).

Glu64 serves as the catalytic Proton acceptor. CMP contacts are provided by residues 274–275 (PR), 316–318 (LGE), and 342–345 (NLIE).

The protein belongs to the glycosyltransferase group 1 family. Glycosyltransferase 30 subfamily.

It localises to the cell inner membrane. The catalysed reaction is lipid IVA (E. coli) + CMP-3-deoxy-beta-D-manno-octulosonate = alpha-Kdo-(2-&gt;6)-lipid IVA (E. coli) + CMP + H(+). It participates in bacterial outer membrane biogenesis; LPS core biosynthesis. Involved in lipopolysaccharide (LPS) biosynthesis. Catalyzes the transfer of a single 3-deoxy-D-manno-octulosonate (Kdo) residue from CMP-Kdo to lipid IV(A), the tetraacyldisaccharide-1,4'-bisphosphate precursor of lipid A. This Bordetella pertussis protein is 3-deoxy-D-manno-octulosonic acid transferase (waaA).